Consider the following 572-residue polypeptide: Proline--tRNA ligase (572 aa).

The protein belongs to the class-II aminoacyl-tRNA synthetase family. ProS type 1 subfamily. In terms of assembly, homodimer.

The protein localises to the cytoplasm. It catalyses the reaction tRNA(Pro) + L-proline + ATP = L-prolyl-tRNA(Pro) + AMP + diphosphate. Functionally, catalyzes the attachment of proline to tRNA(Pro) in a two-step reaction: proline is first activated by ATP to form Pro-AMP and then transferred to the acceptor end of tRNA(Pro). As ProRS can inadvertently accommodate and process non-cognate amino acids such as alanine and cysteine, to avoid such errors it has two additional distinct editing activities against alanine. One activity is designated as 'pretransfer' editing and involves the tRNA(Pro)-independent hydrolysis of activated Ala-AMP. The other activity is designated 'posttransfer' editing and involves deacylation of mischarged Ala-tRNA(Pro). The misacylated Cys-tRNA(Pro) is not edited by ProRS. The sequence is that of Proline--tRNA ligase from Escherichia coli O139:H28 (strain E24377A / ETEC).